We begin with the raw amino-acid sequence, 179 residues long: ATP synthase subunit delta (179 aa).

The protein belongs to the ATPase delta chain family. In terms of assembly, F-type ATPases have 2 components, F(1) - the catalytic core - and F(0) - the membrane proton channel. F(1) has five subunits: alpha(3), beta(3), gamma(1), delta(1), epsilon(1). F(0) has three main subunits: a(1), b(2) and c(10-14). The alpha and beta chains form an alternating ring which encloses part of the gamma chain. F(1) is attached to F(0) by a central stalk formed by the gamma and epsilon chains, while a peripheral stalk is formed by the delta and b chains.

It is found in the cell membrane. Functionally, f(1)F(0) ATP synthase produces ATP from ADP in the presence of a proton or sodium gradient. F-type ATPases consist of two structural domains, F(1) containing the extramembraneous catalytic core and F(0) containing the membrane proton channel, linked together by a central stalk and a peripheral stalk. During catalysis, ATP synthesis in the catalytic domain of F(1) is coupled via a rotary mechanism of the central stalk subunits to proton translocation. In terms of biological role, this protein is part of the stalk that links CF(0) to CF(1). It either transmits conformational changes from CF(0) to CF(1) or is implicated in proton conduction. This chain is ATP synthase subunit delta, found in Clostridium botulinum (strain Loch Maree / Type A3).